The sequence spans 159 residues: 2-C-methyl-D-erythritol 2,4-cyclodiphosphate synthase (159 aa).

Asp8 and His10 together coordinate a divalent metal cation. 4-CDP-2-C-methyl-D-erythritol 2-phosphate is bound by residues 8–10 and 34–35; these read DVH and HS. His42 is a binding site for a divalent metal cation. Residues 56-58, 61-65, 100-106, 132-135, Phe139, and Arg142 contribute to the 4-CDP-2-C-methyl-D-erythritol 2-phosphate site; these read DIG, FPDTD, AQAPKML, and TTTE.

Belongs to the IspF family. Homotrimer. It depends on a divalent metal cation as a cofactor.

It catalyses the reaction 4-CDP-2-C-methyl-D-erythritol 2-phosphate = 2-C-methyl-D-erythritol 2,4-cyclic diphosphate + CMP. It functions in the pathway isoprenoid biosynthesis; isopentenyl diphosphate biosynthesis via DXP pathway; isopentenyl diphosphate from 1-deoxy-D-xylulose 5-phosphate: step 4/6. Involved in the biosynthesis of isopentenyl diphosphate (IPP) and dimethylallyl diphosphate (DMAPP), two major building blocks of isoprenoid compounds. Catalyzes the conversion of 4-diphosphocytidyl-2-C-methyl-D-erythritol 2-phosphate (CDP-ME2P) to 2-C-methyl-D-erythritol 2,4-cyclodiphosphate (ME-CPP) with a corresponding release of cytidine 5-monophosphate (CMP). This is 2-C-methyl-D-erythritol 2,4-cyclodiphosphate synthase from Citrobacter koseri (strain ATCC BAA-895 / CDC 4225-83 / SGSC4696).